Consider the following 63-residue polypeptide: Potassium channel toxin alpha-KTx 21.1 (63 aa).

Positions 1-27 are cleaved as a signal peptide; the sequence is MQFSGVVLILISMTLVNFVFFETKVEA. Intrachain disulfides connect Cys33–Cys53, Cys38–Cys58, and Cys42–Cys60.

Belongs to the short scorpion toxin superfamily. Potassium channel inhibitor family. Alpha-KTx 21 subfamily. Expressed by the venom gland.

The protein resides in the secreted. Reversibly and voltage-independently blocks voltage-gated potassium channels rKv1.2/KCNA2 (73%) (IC(50)=196 nM), hKv1.3/KCNA3 (50%) (IC(50)=508 nM), Shaker IR (30%), rKv1.6/KCNA6 (22%) (at 0.5 uM). Interaction of Ts15 with Kv1.3/KCNA3 is stronger than its interaction with Kv1.2/KCNA2. The sequence is that of Potassium channel toxin alpha-KTx 21.1 from Tityus serrulatus (Brazilian scorpion).